A 222-amino-acid polypeptide reads, in one-letter code: Exosome complex component Rrp4 (222 aa).

The region spanning 63 to 131 (NDSVIGKVVD…EVKKVKLGLH (69 aa)) is the S1 motif domain. Residues 139-200 (EGGTLAYITP…EIVKRALEMI (62 aa)) enclose the KH domain.

The protein belongs to the RRP4 family. Component of the archaeal exosome complex. Forms a trimer of Rrp4 and/or Csl4 subunits. The trimer associates with a hexameric ring-like arrangement composed of 3 Rrp41-Rrp42 heterodimers.

It is found in the cytoplasm. Non-catalytic component of the exosome, which is a complex involved in RNA degradation. Increases the RNA binding and the efficiency of RNA degradation. Confers strong poly(A) specificity to the exosome. In Methanothermus fervidus (strain ATCC 43054 / DSM 2088 / JCM 10308 / V24 S), this protein is Exosome complex component Rrp4.